The following is a 421-amino-acid chain: Expansin-like protein DDB_G0293186 (421 aa).

The signal sequence occupies residues 1-20 (MRTLKLIILLILSTFKTINS). Asn19 is a glycosylation site (N-linked (GlcNAc...) asparagine). The Expansin-like EG45 domain maps to 43–139 (GGQCGLPLPG…QKVSCGFSGY (97 aa)). Cystine bridges form between Cys46–Cys70 and Cys73–Cys134. Residues Asn117 and Asn391 are each glycosylated (N-linked (GlcNAc...) asparagine).

The protein belongs to the expansin family. Expansin A subfamily.

It localises to the secreted. Functionally, may serve to lubricate the movement of the cellulose microfibrils during cell growth and wall extension and/or may serve to maintain the fluid state of the slug cell wall. In Dictyostelium discoideum (Social amoeba), this protein is Expansin-like protein DDB_G0293186.